A 260-amino-acid polypeptide reads, in one-letter code: Alpha- and beta-fibrinogenase OhS1 (260 aa).

An N-terminal signal peptide occupies residues 1–18 (MALIRVLASLLILQLSYA). A propeptide spanning residues 19-24 (VTPFDR) is cleaved from the precursor. One can recognise a Peptidase S1 domain in the interval 25 to 248 (IIGGFECNEY…YIDWIEGIIA (224 aa)). 6 disulfides stabilise this stretch: cysteine 31/cysteine 163, cysteine 50/cysteine 66, cysteine 98/cysteine 255, cysteine 142/cysteine 209, cysteine 174/cysteine 188, and cysteine 199/cysteine 224. N-linked (GlcNAc...) asparagine glycosylation is present at asparagine 44. Catalysis depends on histidine 65, which acts as the Charge relay system. Asparagine 79 is a glycosylation site (N-linked (GlcNAc...) asparagine). The active-site Charge relay system is the aspartate 110. N-linked (GlcNAc...) asparagine glycans are attached at residues asparagine 117 and asparagine 121. Serine 203 acts as the Charge relay system in catalysis. Asparagine 250 is a glycosylation site (N-linked (GlcNAc...) asparagine).

The protein belongs to the peptidase S1 family. Snake venom subfamily. Monomer. As to expression, expressed by the venom gland.

It localises to the secreted. With respect to regulation, completely inhibited by NPGB, PMSF, diisopropylfluorophosphate (DFP), benzamidine and soybean trypsin inhibitor. Not inhibited by EDTA. Functionally, snake venom serine protease that possesses potent fibrinogenolytic (on both alpha- (FGA) and beta-chains (FGB)) and amidolytic activities. Selectively cleaves Arg-|-Xaa or Lys-|-Xaa bonds. The chain is Alpha- and beta-fibrinogenase OhS1 from Ophiophagus hannah (King cobra).